The chain runs to 268 residues: Tryptophan synthase alpha chain (268 aa).

Catalysis depends on proton acceptor residues E49 and D60.

The protein belongs to the TrpA family. In terms of assembly, tetramer of two alpha and two beta chains.

The enzyme catalyses (1S,2R)-1-C-(indol-3-yl)glycerol 3-phosphate + L-serine = D-glyceraldehyde 3-phosphate + L-tryptophan + H2O. Its pathway is amino-acid biosynthesis; L-tryptophan biosynthesis; L-tryptophan from chorismate: step 5/5. Functionally, the alpha subunit is responsible for the aldol cleavage of indoleglycerol phosphate to indole and glyceraldehyde 3-phosphate. This chain is Tryptophan synthase alpha chain, found in Yersinia pseudotuberculosis serotype O:1b (strain IP 31758).